The following is a 1409-amino-acid chain: DNA-directed RNA polymerase subunit beta' (1409 aa).

Zn(2+) contacts are provided by cysteine 72, cysteine 74, cysteine 87, and cysteine 90. 3 residues coordinate Mg(2+): aspartate 462, aspartate 464, and aspartate 466. Positions 816, 890, 897, and 900 each coordinate Zn(2+).

It belongs to the RNA polymerase beta' chain family. In terms of assembly, the RNAP catalytic core consists of 2 alpha, 1 beta, 1 beta' and 1 omega subunit. When a sigma factor is associated with the core the holoenzyme is formed, which can initiate transcription. The cofactor is Mg(2+). Zn(2+) serves as cofactor.

It catalyses the reaction RNA(n) + a ribonucleoside 5'-triphosphate = RNA(n+1) + diphosphate. Functionally, DNA-dependent RNA polymerase catalyzes the transcription of DNA into RNA using the four ribonucleoside triphosphates as substrates. This chain is DNA-directed RNA polymerase subunit beta', found in Aromatoleum aromaticum (strain DSM 19018 / LMG 30748 / EbN1) (Azoarcus sp. (strain EbN1)).